The sequence spans 358 residues: MKPFPRAEISSSALQNNLAVLRQQASRSQVMAVVKANGYGHGLLNVANCLHTADGFGLARLEEALELRAGGVKARLLLLEGFFRSTDLPLLVAHDIDTVVHHESQIEMLEQATLSKPVTVWLKVDSGMHRLGVTPEQFTQVYARLMACDNVAKPIHLMTHFACADEPENHYTQVQMQTFNQLTADLPGFRTLANSAGALYWPKSQGDWIRPGIALYGVSPVTGDCGANHGLIPAMNLVSRLIAVRDHKAGQPVGYGCYWTAKQDTRLGVVAIGYGDGYPRNAPEGTPVWVNGRRVPIVGRVSMDMLTVDLGADATDLVGDEALLWGAALPVEEVAEHIGTIAYELVTKLTPRVAVCLA.

Lys-35 serves as the catalytic Proton acceptor; specific for D-alanine. Lys-35 is modified (N6-(pyridoxal phosphate)lysine). Substrate is bound at residue Arg-130. Tyr-255 acts as the Proton acceptor; specific for L-alanine in catalysis. Met-303 contacts substrate.

This sequence belongs to the alanine racemase family. Pyridoxal 5'-phosphate serves as cofactor.

It catalyses the reaction L-alanine = D-alanine. It functions in the pathway amino-acid biosynthesis; D-alanine biosynthesis; D-alanine from L-alanine: step 1/1. Its function is as follows. Catalyzes the interconversion of L-alanine and D-alanine. May also act on other amino acids. The polypeptide is Alanine racemase (alr) (Shewanella sp. (strain ANA-3)).